A 172-amino-acid chain; its full sequence is Zinc finger protein 580 (172 aa).

A disordered region spans residues 1 to 93 (MLLLPPRPPH…GEPGPRKGYS (93 aa)). Residues 19 to 30 (MDPPPPKAPPFP) are compositionally biased toward pro residues. Lys-31 participates in a covalent cross-link: Glycyl lysine isopeptide (Lys-Gly) (interchain with G-Cter in SUMO2). The segment covering 31-44 (KAEGPSSTPSSAAG) has biased composition (low complexity). Residues 75 to 86 (GPPQREAPPGEP) are compositionally biased toward pro residues. The C2H2-type 1 zinc-finger motif lies at 92–114 (YSCPECARVFASPLRLQSHRVSH). A Glycyl lysine isopeptide (Lys-Gly) (interchain with G-Cter in SUMO2) cross-link involves residue Lys-118. 2 consecutive C2H2-type zinc fingers follow at residues 120 to 142 (FTCG…RATH) and 150 to 172 (HTCP…VRLH).

As to quaternary structure, interacts with SMAD2. As to expression, expressed in endothelial cells.

The protein localises to the nucleus. Involved in the regulation of endothelial cell proliferation and migration. Mediates H(2)O(2)-induced leukocyte chemotaxis by elevating interleukin-8 production and may play a role in inflammation. May be involved in transcriptional regulation. The protein is Zinc finger protein 580 (ZNF580) of Homo sapiens (Human).